The sequence spans 710 residues: Pentatricopeptide repeat-containing protein At1g02060, chloroplastic (710 aa).

Residues 1–21 (MVSSVPKLHALFVSKSQPVLR) constitute a chloroplast transit peptide. PPR repeat units lie at residues 137–171 (QDRY…GISP), 172–202 (SVLT…MRRT), 208–242 (DSYT…HCNP), 243–277 (DVVT…ATDV), 280–314 (NVVS…GLKP), 315–351 (NAVT…TFAP), 352–386 (DACT…KLHP), 387–421 (DSAS…EVLL), 429–459 (LAAA…LMKR), 463–497 (DPPS…EFVP), 498–532 (DLET…SYLP), and 533–567 (VATT…RIRQ).

It belongs to the PPR family. P subfamily.

The protein localises to the plastid. The protein resides in the chloroplast. The chain is Pentatricopeptide repeat-containing protein At1g02060, chloroplastic from Arabidopsis thaliana (Mouse-ear cress).